The following is a 176-amino-acid chain: Acireductone dioxygenase (176 aa).

Fe(2+) is bound by residues histidine 100, histidine 102, glutamate 106, and histidine 145. Ni(2+) contacts are provided by histidine 100, histidine 102, glutamate 106, and histidine 145.

It belongs to the acireductone dioxygenase (ARD) family. In terms of assembly, monomer. The cofactor is Fe(2+). Ni(2+) serves as cofactor.

The catalysed reaction is 1,2-dihydroxy-5-(methylsulfanyl)pent-1-en-3-one + O2 = 3-(methylsulfanyl)propanoate + CO + formate + 2 H(+). It carries out the reaction 1,2-dihydroxy-5-(methylsulfanyl)pent-1-en-3-one + O2 = 4-methylsulfanyl-2-oxobutanoate + formate + 2 H(+). It functions in the pathway amino-acid biosynthesis; L-methionine biosynthesis via salvage pathway; L-methionine from S-methyl-5-thio-alpha-D-ribose 1-phosphate: step 5/6. In terms of biological role, catalyzes 2 different reactions between oxygen and the acireductone 1,2-dihydroxy-3-keto-5-methylthiopentene (DHK-MTPene) depending upon the metal bound in the active site. Fe-containing acireductone dioxygenase (Fe-ARD) produces formate and 2-keto-4-methylthiobutyrate (KMTB), the alpha-ketoacid precursor of methionine in the methionine recycle pathway. Ni-containing acireductone dioxygenase (Ni-ARD) produces methylthiopropionate, carbon monoxide and formate, and does not lie on the methionine recycle pathway. This Bacillus pumilus (strain SAFR-032) protein is Acireductone dioxygenase.